A 391-amino-acid polypeptide reads, in one-letter code: Alanine racemase (391 aa).

Catalysis depends on lysine 46, which acts as the Proton acceptor; specific for D-alanine. Position 46 is an N6-(pyridoxal phosphate)lysine (lysine 46). Arginine 148 serves as a coordination point for substrate. The active-site Proton acceptor; specific for L-alanine is tyrosine 283. Methionine 331 contributes to the substrate binding site.

The protein belongs to the alanine racemase family. Requires pyridoxal 5'-phosphate as cofactor.

It carries out the reaction L-alanine = D-alanine. Its pathway is amino-acid biosynthesis; D-alanine biosynthesis; D-alanine from L-alanine: step 1/1. In terms of biological role, catalyzes the interconversion of L-alanine and D-alanine. May also act on other amino acids. The chain is Alanine racemase (alr) from Streptomyces coelicolor (strain ATCC BAA-471 / A3(2) / M145).